The sequence spans 379 residues: Alanine racemase (379 aa).

K37 serves as the catalytic Proton acceptor; specific for D-alanine. Position 37 is an N6-(pyridoxal phosphate)lysine (K37). R139 contacts substrate. Y266 (proton acceptor; specific for L-alanine) is an active-site residue. Residue M314 coordinates substrate.

It belongs to the alanine racemase family. It depends on pyridoxal 5'-phosphate as a cofactor.

The enzyme catalyses L-alanine = D-alanine. The protein operates within amino-acid biosynthesis; D-alanine biosynthesis; D-alanine from L-alanine: step 1/1. Functionally, catalyzes the interconversion of L-alanine and D-alanine. May also act on other amino acids. The polypeptide is Alanine racemase (alr) (Sorangium cellulosum (strain So ce56) (Polyangium cellulosum (strain So ce56))).